The following is a 300-amino-acid chain: Ribonuclease HIII (300 aa).

In terms of domain architecture, RNase H type-2 spans 86-300 (RPRLGVDESG…FYEICDSTDI (215 aa)). Residues Asp92, Glu93, and Asp196 each coordinate a divalent metal cation.

The protein belongs to the RNase HII family. RnhC subfamily. The cofactor is Mn(2+). Mg(2+) is required as a cofactor.

It is found in the cytoplasm. The catalysed reaction is Endonucleolytic cleavage to 5'-phosphomonoester.. Functionally, endonuclease that specifically degrades the RNA of RNA-DNA hybrids. This chain is Ribonuclease HIII, found in Chlamydia abortus (strain DSM 27085 / S26/3) (Chlamydophila abortus).